Reading from the N-terminus, the 257-residue chain is Imidazole glycerol phosphate synthase subunit HisF (257 aa).

Active-site residues include D11 and D130.

The protein belongs to the HisA/HisF family. As to quaternary structure, heterodimer of HisH and HisF.

It localises to the cytoplasm. It carries out the reaction 5-[(5-phospho-1-deoxy-D-ribulos-1-ylimino)methylamino]-1-(5-phospho-beta-D-ribosyl)imidazole-4-carboxamide + L-glutamine = D-erythro-1-(imidazol-4-yl)glycerol 3-phosphate + 5-amino-1-(5-phospho-beta-D-ribosyl)imidazole-4-carboxamide + L-glutamate + H(+). It participates in amino-acid biosynthesis; L-histidine biosynthesis; L-histidine from 5-phospho-alpha-D-ribose 1-diphosphate: step 5/9. IGPS catalyzes the conversion of PRFAR and glutamine to IGP, AICAR and glutamate. The HisF subunit catalyzes the cyclization activity that produces IGP and AICAR from PRFAR using the ammonia provided by the HisH subunit. The sequence is that of Imidazole glycerol phosphate synthase subunit HisF from Shewanella sediminis (strain HAW-EB3).